The primary structure comprises 412 residues: uncharacterized protein (412 aa).

Residues 6-64 (ELAKGDIISVEVLRPAHGGEGIGHHDGRVIFVKGGIPGDVVDVEIAQLKKKWARGEVVK) enclose the TRAM domain. The S-adenosyl-L-methionine site is built by Q242, Y278, E300, and D341. C368 (nucleophile) is an active-site residue.

This sequence belongs to the class I-like SAM-binding methyltransferase superfamily. RNA M5U methyltransferase family.

This is an uncharacterized protein from Corynebacterium glutamicum (strain ATCC 13032 / DSM 20300 / JCM 1318 / BCRC 11384 / CCUG 27702 / LMG 3730 / NBRC 12168 / NCIMB 10025 / NRRL B-2784 / 534).